The sequence spans 282 residues: Bis(5'-nucleosyl)-tetraphosphatase, symmetrical (282 aa).

The protein belongs to the Ap4A hydrolase family.

It catalyses the reaction P(1),P(4)-bis(5'-adenosyl) tetraphosphate + H2O = 2 ADP + 2 H(+). Functionally, hydrolyzes diadenosine 5',5'''-P1,P4-tetraphosphate to yield ADP. This chain is Bis(5'-nucleosyl)-tetraphosphatase, symmetrical, found in Burkholderia pseudomallei (strain 1106a).